The primary structure comprises 205 residues: Probable GTP-binding protein EngB (205 aa).

Residues 27–201 enclose the EngB-type G domain; it reads TGIEIAFAGR…AVKLDFWFSP (175 aa). Residues 35–42, 62–66, 80–83, 147–150, and 180–182 each bind GTP; these read GRSNAGKS, GRTQL, DLPG, TKAD, and FSA. Residues S42 and T64 each contribute to the Mg(2+) site.

The protein belongs to the TRAFAC class TrmE-Era-EngA-EngB-Septin-like GTPase superfamily. EngB GTPase family. It depends on Mg(2+) as a cofactor.

In terms of biological role, necessary for normal cell division and for the maintenance of normal septation. This is Probable GTP-binding protein EngB from Haemophilus influenzae (strain PittGG).